Here is a 365-residue protein sequence, read N- to C-terminus: MSGNTFGTLFAVTNFGESHGPAIGCVIDGCPPGMPLSEADIQTDLDRRRPGSSRHVTQRNEPDAVEILSGIYQGQTTGTPIALLIRNTDQRSKDYSRSAESFRPGHADYSYWRKYGIRDPRGGGRSSARLTAPTVAAGAVAKKWLALQYGTRFRACMTQLGELPIPFEHWDHVRNNPFFAPVADVAQYEQYIDALRKAGDSCGARIRVQATGMPVGLGEPLYDKLDADIAYALMGLNAVKGVEIGAGFASVAQRGTVHGDTMTPQGFRSNYAGGVLGGISTGQDLELSIAIKPTSSILSPSASIDIHGHSIEVSTKGRHDPCVGIRATPIAEALLALVVMDHALRHRAQCADVVLPLPPIPAAPA.

NADP(+) contacts are provided by Arg-48 and Arg-54. Residues 125-127, 237-238, Gly-277, 292-296, and Arg-318 each bind FMN; these read RSS, NA, and KPTSS.

The protein belongs to the chorismate synthase family. In terms of assembly, homotetramer. Requires FMNH2 as cofactor.

It carries out the reaction 5-O-(1-carboxyvinyl)-3-phosphoshikimate = chorismate + phosphate. Its pathway is metabolic intermediate biosynthesis; chorismate biosynthesis; chorismate from D-erythrose 4-phosphate and phosphoenolpyruvate: step 7/7. In terms of biological role, catalyzes the anti-1,4-elimination of the C-3 phosphate and the C-6 proR hydrogen from 5-enolpyruvylshikimate-3-phosphate (EPSP) to yield chorismate, which is the branch point compound that serves as the starting substrate for the three terminal pathways of aromatic amino acid biosynthesis. This reaction introduces a second double bond into the aromatic ring system. The sequence is that of Chorismate synthase from Verminephrobacter eiseniae (strain EF01-2).